Reading from the N-terminus, the 873-residue chain is Alanine--tRNA ligase (873 aa).

The Zn(2+) site is built by H557, H561, C659, and H663.

The protein belongs to the class-II aminoacyl-tRNA synthetase family. Zn(2+) serves as cofactor.

The protein resides in the cytoplasm. It carries out the reaction tRNA(Ala) + L-alanine + ATP = L-alanyl-tRNA(Ala) + AMP + diphosphate. Catalyzes the attachment of alanine to tRNA(Ala) in a two-step reaction: alanine is first activated by ATP to form Ala-AMP and then transferred to the acceptor end of tRNA(Ala). Also edits incorrectly charged Ser-tRNA(Ala) and Gly-tRNA(Ala) via its editing domain. This is Alanine--tRNA ligase from Nitrosococcus oceani (strain ATCC 19707 / BCRC 17464 / JCM 30415 / NCIMB 11848 / C-107).